The chain runs to 417 residues: Serine hydroxymethyltransferase (417 aa).

(6S)-5,6,7,8-tetrahydrofolate is bound by residues Leu-121 and 125–127; that span reads GHL. The residue at position 229 (Lys-229) is an N6-(pyridoxal phosphate)lysine. 355–357 is a (6S)-5,6,7,8-tetrahydrofolate binding site; the sequence is SPF.

It belongs to the SHMT family. In terms of assembly, homodimer. Requires pyridoxal 5'-phosphate as cofactor.

It localises to the cytoplasm. It catalyses the reaction (6R)-5,10-methylene-5,6,7,8-tetrahydrofolate + glycine + H2O = (6S)-5,6,7,8-tetrahydrofolate + L-serine. The protein operates within one-carbon metabolism; tetrahydrofolate interconversion. It participates in amino-acid biosynthesis; glycine biosynthesis; glycine from L-serine: step 1/1. Its function is as follows. Catalyzes the reversible interconversion of serine and glycine with tetrahydrofolate (THF) serving as the one-carbon carrier. This reaction serves as the major source of one-carbon groups required for the biosynthesis of purines, thymidylate, methionine, and other important biomolecules. Also exhibits THF-independent aldolase activity toward beta-hydroxyamino acids, producing glycine and aldehydes, via a retro-aldol mechanism. The chain is Serine hydroxymethyltransferase from Xanthomonas euvesicatoria pv. vesicatoria (strain 85-10) (Xanthomonas campestris pv. vesicatoria).